Consider the following 824-residue polypeptide: MMNFFTSKSSNQDTGFSSQHQHPNGQNNGNNNSSTAGNDNGYPCKLVSSGPCASSNNGALFTNFTLQTATPTTAISQDLYAMGTTGITSENALFQMKSMNNGISSVNNNNSNTPTIITTSQEETNAGNVHGDTGGNSLQNSEDDNFSSSSTTKCLLSSTSSLSINQREAAAAAYGPDTDIPRGKLEVTIIEARDLVTRSKDSQPYVVCTFESSEFISNGPESLGAINNNNNNNNNNQHNQNQHINNNNENTNPDAASQHHNNNSGWNGSQLPSIKEHLKKKPLYTHRSSSQLDQLNSCSSVTDPSKRSSNSSSGSSNGPKNDSSHPIWHHKTTFDVLGSHSELDISVYDAAHDHMFLGQVRLYPMIHNLAHASQHQWHSLKPRVIDEVVSGDILIKWTYKQTKKRHYGPQDFEVLRLLGKGTFGQVYQVKKKDTQRIYAMKVLSKKVIVKKNEIAHTIGERNILVTTASKSSPFIVGLKFSFQTPTDLYLVTDYMSGGELFWHLQKEGRFSEDRAKFYIAELVLALEHLHDNDIVYRDLKPENILLDANGNIALCDFGLSKADLKDRTNTFCGTTEYLAPELLLDETGYTKMVDFWSLGVLIFEMCCGWSPFFAENNQKMYQKIAFGKVKFPRDVLSQEGRSFVKGLLNRNPKHRLGAIDDGRELRAHPFFADIDWEALKQKKIPPPFKPHLVSETDTSNFDPEFTTASTSYMNKHQPMMTATPLSPAMQAKFAGFTFVDESAIDEHVNNNRKFLQNSYFMEPGSFIPGNPNLPPDEDVIDDDGDEDINDGFNQEKNMNNSHSQMDFDGDQHMDDEFVSGRFEI.

Over residues 1–23 the composition is skewed to polar residues; it reads MMNFFTSKSSNQDTGFSSQHQHP. Disordered regions lie at residues 1–37, 125–152, 221–272, and 285–327; these read MMNF…STAG, NAGN…SSTT, ESLG…SQLP, and THRS…SHPI. The span at 24–37 shows a compositional bias: low complexity; the sequence is NGQNNGNNNSSTAG. Positions 166–378 constitute a C2 domain; sequence QREAAAAAYG…LAHASQHQWH (213 aa). Over residues 226–248 the composition is skewed to low complexity; sequence INNNNNNNNNNQHNQNQHINNNN. Composition is skewed to polar residues over residues 249-272 and 286-302; these read ENTN…SQLP and HRSS…SSVT. Residues 307–321 show a composition bias toward low complexity; it reads RSSNSSSGSSNGPKN. The Protein kinase domain maps to 412–671; the sequence is FEVLRLLGKG…GRELRAHPFF (260 aa). ATP is bound by residues 418–426 and Lys441; that span reads LGKGTFGQV. The Proton acceptor role is filled by Asp538. The residue at position 570 (Thr570) is a Phosphothreonine; by PKH1 or PKH2. Residues 672-748 enclose the AGC-kinase C-terminal domain; it reads ADIDWEALKQ…VDESAIDEHV (77 aa). Ser711 is modified (phosphoserine; by TORC1). Residue Thr723 is modified to Phosphothreonine; by TORC1. Ser726 bears the Phosphoserine; by TORC1 mark. Position 737 is a phosphothreonine; by TORC1 (Thr737). Ser758 and Ser765 each carry phosphoserine; by TORC1.

It belongs to the protein kinase superfamily. AGC Ser/Thr protein kinase family. cAMP subfamily. Phosphorylated by TORC1 in nutrient-replete conditions and during mechanical stress.

The catalysed reaction is L-seryl-[protein] + ATP = O-phospho-L-seryl-[protein] + ADP + H(+). It catalyses the reaction L-threonyl-[protein] + ATP = O-phospho-L-threonyl-[protein] + ADP + H(+). Its activity is regulated as follows. Activated by cAMP. Its function is as follows. Protein kinase that is part of growth control pathway which is at least partially redundant with the cAMP pathway. Regulates both BCY1 phosphorylation and MPK1 activity. Regulates ribosome biogenesis, translation initiation, and entry into stationary phase in a TORC1-dependent manner. The sequence is that of Serine/threonine-protein kinase SCH9 (SCH9) from Saccharomyces cerevisiae (strain ATCC 204508 / S288c) (Baker's yeast).